The following is a 244-amino-acid chain: Triosephosphate isomerase (244 aa).

8-10 serves as a coordination point for substrate; it reads NWK. Catalysis depends on His-93, which acts as the Electrophile. The active-site Proton acceptor is the Glu-161. Residues Gly-167, Ser-206, and 227-228 contribute to the substrate site; that span reads GG.

The protein belongs to the triosephosphate isomerase family. In terms of assembly, homodimer.

The protein localises to the cytoplasm. It catalyses the reaction D-glyceraldehyde 3-phosphate = dihydroxyacetone phosphate. It functions in the pathway carbohydrate biosynthesis; gluconeogenesis. The protein operates within carbohydrate degradation; glycolysis; D-glyceraldehyde 3-phosphate from glycerone phosphate: step 1/1. Its function is as follows. Involved in the gluconeogenesis. Catalyzes stereospecifically the conversion of dihydroxyacetone phosphate (DHAP) to D-glyceraldehyde-3-phosphate (G3P). The chain is Triosephosphate isomerase from Deinococcus radiodurans (strain ATCC 13939 / DSM 20539 / JCM 16871 / CCUG 27074 / LMG 4051 / NBRC 15346 / NCIMB 9279 / VKM B-1422 / R1).